A 205-amino-acid chain; its full sequence is Small ribosomal subunit protein uS4 (205 aa).

The S4 RNA-binding domain occupies 91-149; sequence MRLDALVLRAAFARSISQARQLVVHRHILVDGKLVDRPSYSVSPGQTVKVKPKSVPLDP.

Belongs to the universal ribosomal protein uS4 family. In terms of assembly, part of the 30S ribosomal subunit. Contacts protein S5. The interaction surface between S4 and S5 is involved in control of translational fidelity.

One of the primary rRNA binding proteins, it binds directly to 16S rRNA where it nucleates assembly of the body of the 30S subunit. Its function is as follows. With S5 and S12 plays an important role in translational accuracy. The chain is Small ribosomal subunit protein uS4 from Tropheryma whipplei (strain TW08/27) (Whipple's bacillus).